Here is a 1527-residue protein sequence, read N- to C-terminus: Peroxidasin (1527 aa).

Positions Met1–Ser23 are cleaved as a signal peptide. Positions Val24–Asp53 constitute an LRRNT domain. LRR repeat units follow at residues Pro51–Gly74, Leu75–Gly98, Leu99–Arg122, Pro124–Asn146, Leu147–Arg170, and Asn172–Arg196. Ig-like C2-type domains follow at residues Pro236–Arg322, Pro365–Glu453, Pro458–Lys545, and Pro553–Thr643. 4 disulfide bridges follow: Cys257-Cys307, Cys388-Cys437, Cys479-Cys529, and Cys574-Cys627. A glycan (N-linked (GlcNAc...) asparagine) is linked at Asn419. N-linked (GlcNAc...) asparagine glycans are attached at residues Asn616, Asn673, Asn682, Asn731, and Asn767. Cys768 and Cys784 form a disulfide bridge. Asp862 is a binding site for heme b. His863 (proton acceptor) is an active-site residue. Position 864 (Asp864) interacts with Ca(2+). Disulfide bonds link Cys882–Cys892 and Cys886–Cys909. Residues Thr941, Tyr943, Asp945, and Ser947 each contribute to the Ca(2+) site. A glycan (N-linked (GlcNAc...) asparagine) is linked at Asn962. Residues Cys994 and Cys1005 are joined by a disulfide bond. Heme b contacts are provided by Glu1015 and His1109. Asn1120 and Asn1213 each carry an N-linked (GlcNAc...) asparagine glycan. Disulfide bonds link Cys1212-Cys1269 and Cys1310-Cys1336. A coiled-coil region spans residues Asn1403 to Glu1441. The VWFC domain maps to Ser1463–Pro1524.

Belongs to the peroxidase family. XPO subfamily. In terms of assembly, homotrimer; disulfide-linked. It depends on Ca(2+) as a cofactor. Requires heme b as cofactor. In terms of tissue distribution, expressed in hemocytes. Also expressed in the fat body and gastric caeca.

The protein resides in the secreted. It carries out the reaction (5R)-5-hydroxy-L-lysyl-[collagen] + L-methionyl-[collagen] + H2O2 = [collagen]-(5R)-5-hydroxy-L-lysyl-N-S-L-methionyl-[collagen] + 2 H2O + H(+). The enzyme catalyses bromide + H2O2 = hypobromite + H2O. The catalysed reaction is (5R)-5-hydroxy-L-lysyl-[collagen] + L-methionyl-[collagen] + hypobromite = [collagen]-(5R)-5-hydroxy-L-lysyl-N-S-L-methionyl-[collagen] + bromide + H2O + H(+). It catalyses the reaction L-lysyl-[collagen] + L-methionyl-[collagen] + H2O2 = [collagen]-L-lysyl-N-S-L-methionyl-[collagen] + 2 H2O + H(+). It carries out the reaction L-lysyl-[collagen] + L-methionyl-[collagen] + hypobromite = [collagen]-L-lysyl-N-S-L-methionyl-[collagen] + bromide + H2O + H(+). The enzyme catalyses L-tyrosyl-[protein] + bromide + H2O2 + H(+) = 3-bromo-L-tyrosyl-[protein] + 2 H2O. The catalysed reaction is hypobromite + L-tyrosyl-[protein] + H(+) = 3-bromo-L-tyrosyl-[protein] + H2O. Functionally, catalyzes the two-electron oxidation of bromide by hydrogen peroxide and generates hypobromite as a reactive intermediate which mediates the formation of sulfilimine cross-links between methionine and hydroxylysine residues within an uncross-linked collagen IV NC1 hexamer. Plays a role in extracellular matrix consolidation, phagocytosis and defense. In Drosophila melanogaster (Fruit fly), this protein is Peroxidasin.